We begin with the raw amino-acid sequence, 148 residues long: MSIIDNRKAHFDYHIEERYEAGLVLEGWEVKALRAGRGQIKEGYVVVKNAEIFLIGTHISPLPEASTHIKPDPVRTRKLLLHREEIKKLIGKVEQRGYTLVPLNFHYKGGRVKCDIALAKGKKLHDKRETEKKRDWEREKARIMRAGT.

Residues 129 to 142 are compositionally biased toward basic and acidic residues; sequence ETEKKRDWEREKAR. Residues 129-148 form a disordered region; sequence ETEKKRDWEREKARIMRAGT.

This sequence belongs to the SmpB family.

The protein localises to the cytoplasm. Its function is as follows. Required for rescue of stalled ribosomes mediated by trans-translation. Binds to transfer-messenger RNA (tmRNA), required for stable association of tmRNA with ribosomes. tmRNA and SmpB together mimic tRNA shape, replacing the anticodon stem-loop with SmpB. tmRNA is encoded by the ssrA gene; the 2 termini fold to resemble tRNA(Ala) and it encodes a 'tag peptide', a short internal open reading frame. During trans-translation Ala-aminoacylated tmRNA acts like a tRNA, entering the A-site of stalled ribosomes, displacing the stalled mRNA. The ribosome then switches to translate the ORF on the tmRNA; the nascent peptide is terminated with the 'tag peptide' encoded by the tmRNA and targeted for degradation. The ribosome is freed to recommence translation, which seems to be the essential function of trans-translation. This is SsrA-binding protein from Burkholderia orbicola (strain AU 1054).